We begin with the raw amino-acid sequence, 337 residues long: Casein kinase I isoform alpha (337 aa).

A2 carries the N-acetylalanine modification. S4 carries the phosphoserine modification. An N6-acetyllysine modification is found at K8. In terms of domain architecture, Protein kinase spans 17–285 (YKLVRKIGSG…YLRQLFRILF (269 aa)). Residues 23–31 (IGSGSFGDI) and K46 each bind ATP. D136 functions as the Proton acceptor in the catalytic mechanism. The span at 309 to 325 (AASSSGQGQQAQTPTGK) shows a compositional bias: low complexity. The disordered stretch occupies residues 309–337 (AASSSGQGQQAQTPTGKQTDKTKSNMKGF).

Belongs to the protein kinase superfamily. CK1 Ser/Thr protein kinase family. Casein kinase I subfamily. In terms of assembly, interacts with the Axin complex. Interacts with TUT1, leading to TUT1 phosphorylation. Interacts with FAM83A, FAM83B, FAM83C, FAM83D, FAM83E, FAM83F, FAM83G and FAM83H (via DUF1669). Interaction with FAM83H recruits CSNK1A1 to keratin filaments. In terms of processing, phosphorylated by MTOR in response to mitogenic stimulation, leading to its activation.

It localises to the cytoplasm. The protein resides in the cytoskeleton. Its subcellular location is the microtubule organizing center. It is found in the centrosome. The protein localises to the chromosome. It localises to the centromere. The protein resides in the kinetochore. Its subcellular location is the nucleus speckle. It is found in the cilium basal body. The protein localises to the spindle. The catalysed reaction is L-seryl-[protein] + ATP = O-phospho-L-seryl-[protein] + ADP + H(+). The enzyme catalyses L-threonyl-[protein] + ATP = O-phospho-L-threonyl-[protein] + ADP + H(+). Its function is as follows. Casein kinases are operationally defined by their preferential utilization of acidic proteins such as caseins as substrates. Can phosphorylate a large number of proteins. Participates in Wnt signaling. Phosphorylates CTNNB1 at 'Ser-45'. May phosphorylate PER1 and PER2. May play a role in segregating chromosomes during mitosis. May play a role in keratin cytoskeleton disassembly and thereby, it may regulate epithelial cell migration. Acts as a positive regulator of mTORC1 and mTORC2 signaling in response to nutrients by mediating phosphorylation of DEPTOR inhibitor. Acts as an inhibitor of NLRP3 inflammasome assembly by mediating phosphorylation of NLRP3. This is Casein kinase I isoform alpha (Csnk1a1) from Mus musculus (Mouse).